The primary structure comprises 204 residues: Ribosome maturation factor RimM (204 aa).

In terms of domain architecture, PRC barrel spans 117–192 (DEDEFFSADL…EVTIDPPDDL (76 aa)).

Belongs to the RimM family. Binds ribosomal protein uS19.

The protein localises to the cytoplasm. An accessory protein needed during the final step in the assembly of 30S ribosomal subunit, possibly for assembly of the head region. Essential for efficient processing of 16S rRNA. May be needed both before and after RbfA during the maturation of 16S rRNA. It has affinity for free ribosomal 30S subunits but not for 70S ribosomes. The sequence is that of Ribosome maturation factor RimM from Methylobacterium nodulans (strain LMG 21967 / CNCM I-2342 / ORS 2060).